Here is a 791-residue protein sequence, read N- to C-terminus: Protein FAM47A (791 aa).

Disordered stretches follow at residues 195-257 (PVSH…TRRR), 274-409 (EDAR…TGVC), and 449-573 (VKKT…SEPP). Basic and acidic residues-rich tracts occupy residues 274–288 (EDARAPCEGREKTTD) and 333–342 (GESHLRLEHS). A compositionally biased stretch (polar residues) spans 349-358 (SLRSEPSETG). A compositionally biased stretch (basic and acidic residues) spans 449–462 (VKKTKEPTEPHKSP).

It belongs to the FAM47 family.

The protein is Protein FAM47A (FAM47A) of Homo sapiens (Human).